The sequence spans 639 residues: Elongation factor 4 (639 aa).

The region spanning 39-221 is the tr-type G domain; that stretch reads TMIRNFCIIA…EIVRRVPAPV (183 aa). Residues 51–56 and 168–171 each bind GTP; these read DHGKST and NKID.

The protein belongs to the TRAFAC class translation factor GTPase superfamily. Classic translation factor GTPase family. LepA subfamily.

The protein resides in the cell membrane. It carries out the reaction GTP + H2O = GDP + phosphate + H(+). Functionally, required for accurate and efficient protein synthesis under certain stress conditions. May act as a fidelity factor of the translation reaction, by catalyzing a one-codon backward translocation of tRNAs on improperly translocated ribosomes. Back-translocation proceeds from a post-translocation (POST) complex to a pre-translocation (PRE) complex, thus giving elongation factor G a second chance to translocate the tRNAs correctly. Binds to ribosomes in a GTP-dependent manner. The chain is Elongation factor 4 from Frankia casuarinae (strain DSM 45818 / CECT 9043 / HFP020203 / CcI3).